The chain runs to 364 residues: Dihydroorotate dehydrogenase (quinone) (364 aa).

FMN contacts are provided by residues 61 to 65 (AGYDK) and threonine 85. Lysine 65 contributes to the substrate binding site. 110 to 114 (NRLGF) contacts substrate. The FMN site is built by asparagine 139 and asparagine 170. A substrate-binding site is contributed by asparagine 170. Serine 173 acts as the Nucleophile in catalysis. Asparagine 175 lines the substrate pocket. FMN is bound by residues lysine 215 and serine 243. Position 244–245 (244–245 (NT)) interacts with substrate. FMN-binding positions include glycine 266, glycine 295, and 316–317 (YT).

Belongs to the dihydroorotate dehydrogenase family. Type 2 subfamily. Monomer. FMN is required as a cofactor.

The protein resides in the cell membrane. The catalysed reaction is (S)-dihydroorotate + a quinone = orotate + a quinol. It participates in pyrimidine metabolism; UMP biosynthesis via de novo pathway; orotate from (S)-dihydroorotate (quinone route): step 1/1. Its function is as follows. Catalyzes the conversion of dihydroorotate to orotate with quinone as electron acceptor. The chain is Dihydroorotate dehydrogenase (quinone) from Brucella abortus (strain S19).